Consider the following 496-residue polypeptide: Lysine--tRNA ligase (496 aa).

Positions 408 and 415 each coordinate Mg(2+).

Belongs to the class-II aminoacyl-tRNA synthetase family. In terms of assembly, homodimer. Mg(2+) serves as cofactor.

The protein resides in the cytoplasm. It carries out the reaction tRNA(Lys) + L-lysine + ATP = L-lysyl-tRNA(Lys) + AMP + diphosphate. The polypeptide is Lysine--tRNA ligase (Legionella pneumophila (strain Lens)).